Consider the following 443-residue polypeptide: Tryptophan synthase beta chain 2, chloroplastic (443 aa).

The disordered stretch occupies residues 1–32 (PGPPPPAPEGRRRRGRGRNAAGQAVAAEASPA). The N-terminal 45 residues, 1–45 (PGPPPPAPEGRRRRGRGRNAAGQAVAAEASPAAVEMGNGAAAPGL), are a transit peptide targeting the chloroplast. A compositionally biased stretch (low complexity) spans 18-32 (RNAAGQAVAAEASPA). The residue at position 138 (Lys-138) is an N6-(pyridoxal phosphate)lysine.

It belongs to the TrpB family. In terms of assembly, tetramer of two alpha and two beta chains. Pyridoxal 5'-phosphate is required as a cofactor.

Its subcellular location is the plastid. The protein resides in the chloroplast. The catalysed reaction is (1S,2R)-1-C-(indol-3-yl)glycerol 3-phosphate + L-serine = D-glyceraldehyde 3-phosphate + L-tryptophan + H2O. It participates in amino-acid biosynthesis; L-tryptophan biosynthesis; L-tryptophan from chorismate: step 5/5. The beta subunit is responsible for the synthesis of L-tryptophan from indole and L-serine. This chain is Tryptophan synthase beta chain 2, chloroplastic (TSB2), found in Zea mays (Maize).